The chain runs to 186 residues: Nucleoside diphosphate kinase, mitochondrial (186 aa).

Residues 1 to 32 (MGSLFGRVAALRALLCGPRFQCLLVRPSSGGP) constitute a mitochondrion transit peptide. ATP is bound by residues K44, F92, R120, T126, R137, and N147. Residue H150 is the Pros-phosphohistidine intermediate of the active site.

Belongs to the NDK family. In terms of assembly, homohexamer. Interacts with OPA1. Interacts with CAPN8. Mg(2+) is required as a cofactor. As to expression, expressed in the base region of the oxyntic and pyloric mucosae.

The protein localises to the mitochondrion intermembrane space. The protein resides in the mitochondrion matrix. It catalyses the reaction a 2'-deoxyribonucleoside 5'-diphosphate + ATP = a 2'-deoxyribonucleoside 5'-triphosphate + ADP. The catalysed reaction is a ribonucleoside 5'-diphosphate + ATP = a ribonucleoside 5'-triphosphate + ADP. Functionally, major role in the synthesis of nucleoside triphosphates other than ATP. The ATP gamma phosphate is transferred to the NDP beta phosphate via a ping-pong mechanism, using a phosphorylated active-site intermediate. Through the catalyzed exchange of gamma-phosphate between di- and triphosphonucleosides participates in regulation of intracellular nucleotide homeostasis. Binds to anionic phospholipids, predominantly to cardiolipin; the binding inhibits its phosphotransfer activity. Acts as a mitochondria-specific NDK; its association with cardiolipin-containing mitochondrial inner membrane is coupled to respiration suggesting that ADP locally regenerated in the mitochondrion innermembrane space by its activity is directly taken up via ANT ADP/ATP translocase into the matrix space to stimulate respiratory ATP regeneration. Proposed to increase GTP-loading on dynamin-related GTPase OPA1 in mitochondria. In vitro can induce liposome cross-linking suggesting that it can cross-link inner and outer membranes to form contact sites, and promotes intermembrane migration of anionic phosphoplipids. Promotes the redistribution of cardiolipin between the mitochondrial inner membrane and outer membrane which is implicated in pro-apoptotic signaling. The sequence is that of Nucleoside diphosphate kinase, mitochondrial (Nme4) from Mus musculus (Mouse).